Reading from the N-terminus, the 734-residue chain is Photosystem I P700 chlorophyll a apoprotein A2 (734 aa).

Helical transmembrane passes span 46-69 (IFAS…FHVA), 135-158 (LYTG…LHLQ), 175-199 (LNHH…HVAI), 273-291 (IAHH…GHMY), 330-353 (IHFQ…QHMY), 369-395 (AALY…IFFI), 417-439 (AIIS…LYVH), and 517-535 (FLVH…LILV). The [4Fe-4S] cluster site is built by Cys559 and Cys568. 2 consecutive transmembrane segments (helical) span residues 575 to 596 (AFYL…YWHW) and 643 to 665 (LSVW…MFLI). Positions 654, 662, and 670 each coordinate chlorophyll a. A phylloquinone-binding site is contributed by Trp671. A helical membrane pass occupies residues 707 to 727 (LVGLAHFSVGYIFTYAAFLIA).

It belongs to the PsaA/PsaB family. The PsaA/B heterodimer binds the P700 chlorophyll special pair and subsequent electron acceptors. PSI consists of a core antenna complex that captures photons, and an electron transfer chain that converts photonic excitation into a charge separation. The eukaryotic PSI reaction center is composed of at least 11 subunits. It depends on P700 is a chlorophyll a/chlorophyll a' dimer, A0 is one or more chlorophyll a, A1 is one or both phylloquinones and FX is a shared 4Fe-4S iron-sulfur center. as a cofactor.

Its subcellular location is the plastid. It localises to the chloroplast thylakoid membrane. It catalyses the reaction reduced [plastocyanin] + hnu + oxidized [2Fe-2S]-[ferredoxin] = oxidized [plastocyanin] + reduced [2Fe-2S]-[ferredoxin]. Functionally, psaA and PsaB bind P700, the primary electron donor of photosystem I (PSI), as well as the electron acceptors A0, A1 and FX. PSI is a plastocyanin-ferredoxin oxidoreductase, converting photonic excitation into a charge separation, which transfers an electron from the donor P700 chlorophyll pair to the spectroscopically characterized acceptors A0, A1, FX, FA and FB in turn. Oxidized P700 is reduced on the lumenal side of the thylakoid membrane by plastocyanin. The polypeptide is Photosystem I P700 chlorophyll a apoprotein A2 (Saccharum hybrid (Sugarcane)).